The following is a 590-amino-acid chain: Aspartate--tRNA(Asp/Asn) ligase (590 aa).

Residue E173 participates in L-aspartate binding. Residues 197 to 200 are aspartate; it reads QIFK. Residue R219 participates in L-aspartate binding. ATP contacts are provided by residues 219–221 and Q228; that span reads RDE. An L-aspartate-binding site is contributed by H450. E484 contributes to the ATP binding site. L-aspartate is bound at residue R491. 536 to 539 provides a ligand contact to ATP; the sequence is GLDR.

It belongs to the class-II aminoacyl-tRNA synthetase family. Type 1 subfamily. Homodimer.

It is found in the cytoplasm. It carries out the reaction tRNA(Asx) + L-aspartate + ATP = L-aspartyl-tRNA(Asx) + AMP + diphosphate. Aspartyl-tRNA synthetase with relaxed tRNA specificity since it is able to aspartylate not only its cognate tRNA(Asp) but also tRNA(Asn). Reaction proceeds in two steps: L-aspartate is first activated by ATP to form Asp-AMP and then transferred to the acceptor end of tRNA(Asp/Asn). This chain is Aspartate--tRNA(Asp/Asn) ligase, found in Coxiella burnetii (strain Dugway 5J108-111).